The chain runs to 77 residues: MKNYSKNATYLITVLLFSFVAMLLIIPSKCEAVSNDMQPLEARSADLVPEPRYIIDVPPRCPPGSKFIKNRCRVIVP.

Positions 1–32 are cleaved as a signal peptide; sequence MKNYSKNATYLITVLLFSFVAMLLIIPSKCEA. The propeptide occupies 33-52; it reads VSNDMQPLEARSADLVPEPR. Residues C61 and C72 are joined by a disulfide bond.

This sequence belongs to the secapin family. As to expression, expressed by the venom gland.

The protein resides in the secreted. Functionally, nontoxic peptide. The polypeptide is Secapin (Vespa magnifica (Hornet)).